We begin with the raw amino-acid sequence, 274 residues long: Undecaprenyl-diphosphatase 1 (274 aa).

7 consecutive transmembrane segments (helical) span residues 47–67 (QVFL…LYFN), 85–105 (VSMW…GIPF), 113–133 (FYNY…FIMI), 150–170 (ITYT…VFPG), 196–216 (FFLA…KFGL), 225–245 (ILFI…KFLM), and 253–273 (FKAF…YFLI).

It belongs to the UppP family.

It is found in the cell membrane. It catalyses the reaction di-trans,octa-cis-undecaprenyl diphosphate + H2O = di-trans,octa-cis-undecaprenyl phosphate + phosphate + H(+). Its function is as follows. Catalyzes the dephosphorylation of undecaprenyl diphosphate (UPP). Confers resistance to bacitracin. The protein is Undecaprenyl-diphosphatase 1 of Clostridium acetobutylicum (strain ATCC 824 / DSM 792 / JCM 1419 / IAM 19013 / LMG 5710 / NBRC 13948 / NRRL B-527 / VKM B-1787 / 2291 / W).